A 459-amino-acid chain; its full sequence is Phosphoglucosamine mutase (459 aa).

Ser-105 serves as the catalytic Phosphoserine intermediate. Mg(2+) is bound by residues Ser-105, Asp-252, Asp-254, and Asp-256. A Phosphoserine modification is found at Ser-105.

Belongs to the phosphohexose mutase family. Mg(2+) is required as a cofactor. Post-translationally, activated by phosphorylation.

The catalysed reaction is alpha-D-glucosamine 1-phosphate = D-glucosamine 6-phosphate. Catalyzes the conversion of glucosamine-6-phosphate to glucosamine-1-phosphate. This is Phosphoglucosamine mutase from Bifidobacterium adolescentis (strain ATCC 15703 / DSM 20083 / NCTC 11814 / E194a).